The chain runs to 2474 residues: MFKETEIQQRYFATGTGTTMLANRLSYFYDLHGPSISLDTACSSSLNACHLACNSLRLGECDMALAAGCNLFYNPDTIIPLTALGFLSPDGRCYSFDERANGYSRGEGFGMVVLKRLSDAIRDGDCIRAIVRGSSSNQDGNSPGITQPTRQAQVDLINAAYQSAGLSKTQTRFFEAHGTGTPVGDPIEASAISGAFSEYRSEQEPMVVGAVKTNIGHLEGSAGIAGLIKAIMVLEKGIIPPNMGFQTPNPKIPVHDWHLKFPTKPEAWPSKGLRRASINAFGYGGSNAHIIIDDAYHYLLEHGLKGKHQTIEFPPVEGLRPSINGTNGTNGHLNGITNNHSNGHQSTSGSSDDEYILVKRFKGYAPPCRSFFFSTFDEAGAARMAQAYREFLDSTNKSIVAGSEEEQGFLSDLSYTLINHRTSFPWRFSIVADSIAALTNKLEGNPSPVRATADPKLGFVFTGQGAQWYAMGRELLSAYPTFSTSIFAADLYLRELGCPWSLVGELLQNQDKSRIDDPELSQPICTALQVALVDLLASWGIKPAAVVGHSSGEIGAAYATGAISQESAWRLAFYRGALSSRLAKSPDHTNGAMLSVAMSSSSAMSYLEEHVGSAAGRDIVVACINSPRNVTLSGSAVYIDKIKAAADSGGIFARKLKVDNSYHSPLMATIADEYRSLIGDLEAGTNISPGKVAPVFYSSLGGTVISASALKNRDHWVDNLVSPVQFSKAFSLMCSNTSSSAPVKKLGSSAKATVKPPKITQVLEIGPHAALRGPIREIMELTPEVSGIGYESVLRRGTSAVDTALGAANWLWCRGYEVDMSDASIAKDSSLVVNAPGYPFNHSNIYWNESRISKGYRFRPAMRHELLGAPVPDWDPANAVWRNYLRLSENPWVKHHRITGATIYPAAGMLVMAIEASRQMADISRVVKGFRILDARFNVALRVPATQNGLETHFYMQPSRDHPDTVARTVRKFSLSSYEGGEWREHCHGLVVTEYEQPYTVVDDGREDFEFQEACKNRLAGVEKASKVETSFRQLYEHLSTVGLDFGATFQTLRDIRCGDIGEAVATVERQDLESLMPLGYLQDHLIHPTVLDGILQSIIVSLTKGGREIDQVMVPSEIGDLWVSADPSTSKFDAIRVSCSGKFLGIRQAEARIVGIDVDIGKAVCTVDNFVITTVARSEGASSSDAARRLCFNLDYKVDPALLDQETADKTIQPDAKCGATTQQAQLIQEVEMMCFLYIKRFWDRIYNENRDAKSVPYHKKYIAWIKHQLEKYDAGLIPHAMPEWRERAADDQYISQMEIKLLTDGSAEGKLVVNVGRELPNILAGKSDALELLFKDKLVENVYRSGVGAEIGYDRMVAYIDALAHKNPALRVLEVGAGTGGATRPILKCLTTQDISIGFFENAREMFKDSAARMSFRALNIEENLEQQGFSGPGEQYDVICAANVIHATRNLEATLSNARKLLKPGGKLILYEMTNTGMIRTGFAFGLLPGWWLSVEDFRQFTPLAAPNDWSRSLKASGFSGIDLHIYDFPDHRHQMVSVLICTALGDGSEENTPTSSYSSSPIKIITCGAGSGSATQESLATVLEKQASSLSTSVAVVNLQDAVADLKDLQQTRCIFLGDLESNFLEHVHDDDYEAFQKLISSTKTLFWVNQGGGPSPKNPGADMVTGFARCMRAENPGLNFVTLSIDDLGSLDKTSSIILRLLSTGGGNENTFFEKDGAVYIPRITEANTVNHLIAAKTKGEPARSETWQDASNGRALTLQCAVPGLLDSLQFQDDELYEKPLRPYDVEVIGEAFGQECAGVVTRVGTDVERVSVGDSVCGLLRGTFKTFARGSQWQFAKIPSTIDYAVAASVPVVYTTAYYGLHDLARLQAGESILIHWGAGGVGQAAIQLAKAVGAEVFVTVGSIEKRDFVHEHYGIPLHNVLSSRDLSFVHGIKRLTDGRGVDVILNSTAGQTLRASWDCIAPYGRFIEIGKVDIFANAGLPMGPFKKSVTFSFFDIGLISLERGRLFSRVLQDVVDLLAKGSITPPQPLHVYSYSDIQEAFRIMQSGSHMGKLVLKAQDDDHVMVEPSRKPTYYFDPDASYLLSGGLGGLGRSAARWMASRGAKNLILLSRSGTTRPAAQELMKELAAAGVTASAPQCDVSDRAALERVLNDCAKTMPPIKGCIQGSMVLKDSIFSNMSPEDYYTAVRPKVVASRNLHELLPQDMDFFILLSSASGVVGNRGQSNYCVGNTYQDSLARHRVALGLPGVAVDLGMILSVGFAAENQESMANLRQEGFNAMREDEFLALLDMLCGPNGTYSTNANREMEASSFAQIAVGLEAPATLRIKGIPEPAWMTDPLFKHLYQIRGEGDHEGEGDGEGSATSCSTLLPAAASLADAAKIVSAAIVQKLCKALSSSERDIDVSKPLHSYGVDSLVAVELRAWFMKEVGSDVAVFDIMSGQSLEELAELAAKRSSFASFDDEKEAD.

Residues 1–294 (MFKETEIQQR…GSNAHIIIDD (294 aa)) form the Ketosynthase family 3 (KS3) domain. Catalysis depends on for beta-ketoacyl synthase activity residues cysteine 42, histidine 177, and histidine 217. Residues 459 to 798 (FVFTGQGAQW…GYESVLRRGT (340 aa)) enclose the Malonyl-CoA:ACP transacylase (MAT) domain. The interval 864-998 (HELLGAPVPD…GLVVTEYEQP (135 aa)) is N-terminal hotdog fold. The PKS/mFAS DH domain maps to 864–1182 (HELLGAPVPD…ITTVARSEGA (319 aa)). Histidine 896 functions as the Proton acceptor; for dehydratase activity in the catalytic mechanism. Residues 1027–1182 (KVETSFRQLY…ITTVARSEGA (156 aa)) are C-terminal hotdog fold. Aspartate 1093 (proton donor; for dehydratase activity) is an active-site residue. Positions 1232-1535 (VEMMCFLYIK…DLHIYDFPDH (304 aa)) are methyltransferase (CMet) domain. Positions 1770 to 2063 (GLLDSLQFQD…SGSHMGKLVL (294 aa)) constitute an Enoyl reductase (ER) domain. The 177-residue stretch at 2087–2263 (ASYLLSGGLG…PGVAVDLGMI (177 aa)) folds into the Ketoreductase (KR) domain. A Carrier domain is found at 2385-2462 (DAAKIVSAAI…ELAELAAKRS (78 aa)). Serine 2422 carries the O-(pantetheine 4'-phosphoryl)serine modification.

Requires pantetheine 4'-phosphate as cofactor.

The protein operates within secondary metabolite biosynthesis. Its function is as follows. Highly reducing polyketide synthase; part of the gene cluster that mediates the biosynthesis of the gamma-pyrones fusapyrone (FPY) and deoxyfusapyrone (dFPY). FPY is an undecaketide and thus likely synthesized by the polyketide synthase FPY1 from acetyl-CoA functioning as starter unit and the addition of 10 malonyl-CoA extender units by successive Claisen-condensations. Next to this, FPY shares some rare features: C-glycosylated 4-deoxyglucose at C-3, a gem-dimethyl group at C-13, and an alpha-beta to beta-gamma double bond shift at C-20. During FPY biosynthesis mono-C-methyl groups are transferred to the tetra-, penta-, hexa- and heptaketide, while two C-methyl groups are transferred to the nonaketide, suggesting that the CMet domain is programmed to selectively catalyze two successive C-alpha-methylation reactions of the nonaketide, while other alpha-carbons are non- or mono-methylated only. While the origin of the 4'-deoxyglucose moiety remains opaque, its transfer to C-3 is most likely mediated by the C-glycosyltransferase FPY2. Next to this, the hydroxyl group present at C-33 and discriminating between FPY and dFPY, is likely to be installed by the cytochrome P450 monooxygenase FPY7. No putative function can be predicted for the remaining genes FPY3-FPY6. The protein is Highly reducing polyketide synthase 40 of Fusarium mangiferae (Mango malformation disease fungus).